A 446-amino-acid chain; its full sequence is Exodeoxyribonuclease 7 large subunit (446 aa).

This sequence belongs to the XseA family. Heterooligomer composed of large and small subunits.

Its subcellular location is the cytoplasm. It catalyses the reaction Exonucleolytic cleavage in either 5'- to 3'- or 3'- to 5'-direction to yield nucleoside 5'-phosphates.. Its function is as follows. Bidirectionally degrades single-stranded DNA into large acid-insoluble oligonucleotides, which are then degraded further into small acid-soluble oligonucleotides. The chain is Exodeoxyribonuclease 7 large subunit from Streptococcus agalactiae serotype III (strain NEM316).